The sequence spans 264 residues: MRPRMKYSNSKISPAKCDSTSGRALVPPCKITRSQQKTKDICHVYCMRLRSGLTIRKETCYFGKEPAKRYSLKSGSKHEGRLSTCLPDSRKRSLLGSIQAFAASVDTLSIQGTSLLTESCALSTYNDQSVSFVLENGCYVINVEDCGKNQEKDKVLLRYYESSFPAQSGDGVDGKKLMVNMSPIKDTDIWLNANDKDYSVELQKGDVSPPDQAFFVLHKKSSDFVSFECKNLPGTYIGVKDNQLALVEENDESCNNIMFKLSKM.

The interval 1-67 (MRPRMKYSNS…ETCYFGKEPA (67 aa)) is homeodomain-like HTH domain. The propeptide occupies 1-101 (MRPRMKYSNS…RSLLGSIQAF (101 aa)). Positions 66-108 (PAKRYSLKSGSKHEGRLSTCLPDSRKRSLLGSIQAFAASVDTL) are interaction with RELA.

The protein belongs to the IL-1 family. Highly divergent. In terms of assembly, forms a 1:1:1 heterotrimeric complex with its primary high-affinity receptor IL1RL1 and the coreceptor IL1RAP. Interacts with cargo receptor TMED10; the interaction mediates the translocation from the cytoplasm into the ERGIC (endoplasmic reticulum-Golgi intermediate compartment) and thereby secretion. In terms of processing, the full-length protein can be released from cells and is able to signal via the IL1RL1/ST2 receptor. However, proteolytic processing by CELA1, CSTG/cathepsin G and ELANE/neutrophil elastase produces C-terminal peptides that are more active than the unprocessed full-length protein. May also be proteolytically processed by calpains. Proteolytic cleavage mediated by apoptotic caspases including CASP3 and CASP7 results in IL33 inactivation. In vitro proteolytic cleavage by CASP1 was reported but could not be confirmed in vivo suggesting that IL33 is probably not a direct substrate for that caspase.

The protein localises to the nucleus. The protein resides in the chromosome. Its subcellular location is the cytoplasm. It localises to the cytoplasmic vesicle. It is found in the secretory vesicle. The protein localises to the secreted. Cytokine that binds to and signals through the IL1RL1/ST2 receptor which in turn activates NF-kappa-B and MAPK signaling pathways in target cells. Involved in the maturation of Th2 cells inducing the secretion of T-helper type 2-associated cytokines. Also involved in activation of mast cells, basophils, eosinophils and natural killer cells. Acts as a chemoattractant for Th2 cells, and may function as an 'alarmin', that amplifies immune responses during tissue injury. Induces rapid UCP2-dependent mitochondrial rewiring that attenuates the generation of reactive oxygen species and preserves the integrity of Krebs cycle required for persistent production of itaconate and subsequent GATA3-dependent differentiation of inflammation-resolving alternatively activated macrophages. Functionally, in quiescent endothelia the uncleaved form is constitutively and abundantly expressed, and acts as a chromatin-associated nuclear factor with transcriptional repressor properties, it may sequester nuclear NF-kappaB/RELA, lowering expression of its targets. This form is rapidely lost upon angiogenic or pro-inflammatory activation. This chain is Interleukin-33, found in Rattus norvegicus (Rat).